The following is a 156-amino-acid chain: Ribosomal RNA large subunit methyltransferase H (156 aa).

Residues Leu-73, Gly-104, and 123 to 128 (LSPLTL) contribute to the S-adenosyl-L-methionine site.

This sequence belongs to the RNA methyltransferase RlmH family. As to quaternary structure, homodimer.

It localises to the cytoplasm. It catalyses the reaction pseudouridine(1915) in 23S rRNA + S-adenosyl-L-methionine = N(3)-methylpseudouridine(1915) in 23S rRNA + S-adenosyl-L-homocysteine + H(+). Functionally, specifically methylates the pseudouridine at position 1915 (m3Psi1915) in 23S rRNA. The protein is Ribosomal RNA large subunit methyltransferase H of Marinobacter nauticus (strain ATCC 700491 / DSM 11845 / VT8) (Marinobacter aquaeolei).